We begin with the raw amino-acid sequence, 419 residues long: L-rhamnose isomerase (419 aa).

Mn(2+) contacts are provided by His-262, Asp-294, and Asp-296.

It belongs to the rhamnose isomerase family. As to quaternary structure, homotetramer. Mn(2+) is required as a cofactor.

It localises to the cytoplasm. It carries out the reaction L-rhamnopyranose = L-rhamnulose. It participates in carbohydrate degradation; L-rhamnose degradation; glycerone phosphate from L-rhamnose: step 1/3. Its function is as follows. Catalyzes the interconversion of L-rhamnose and L-rhamnulose. The chain is L-rhamnose isomerase from Salmonella gallinarum (strain 287/91 / NCTC 13346).